A 146-amino-acid chain; its full sequence is MPSQGKKYEYLEHTADIKFLAYGNTLKEVFENAALAMFNVIIDTGKVSGETAREVCLTSPDLESLLVDWLSELLYLFEVDEIVFWKFRVEEIREEEGEYSIKAVASGEQYYPESHPFETEIKAVTYNQLELEKTADGWKAQVVVDI.

Ca(2+)-binding residues include Asp-16, Asp-145, and Ile-146.

It belongs to the archease family.

Its function is as follows. Activates the tRNA-splicing ligase complex by facilitating the enzymatic turnover of catalytic subunit RtcB. Acts by promoting the guanylylation of RtcB, a key intermediate step in tRNA ligation. Can also alter the NTP specificity of RtcB such that ATP, dGTP or ITP is used efficiently. The polypeptide is Protein archease (Methanosarcina acetivorans (strain ATCC 35395 / DSM 2834 / JCM 12185 / C2A)).